Here is a 195-residue protein sequence, read N- to C-terminus: Glycerol-3-phosphate acyltransferase (195 aa).

The next 5 helical transmembrane spans lie at 2–22 (LWIF…GLFI), 52–72 (YGVA…LMAY), 78–98 (WIFI…SIFM), 112–132 (VFLA…LAVI), and 145–165 (FAVA…VPLA).

The protein belongs to the PlsY family. In terms of assembly, probably interacts with PlsX.

It is found in the cell inner membrane. It carries out the reaction an acyl phosphate + sn-glycerol 3-phosphate = a 1-acyl-sn-glycero-3-phosphate + phosphate. The protein operates within lipid metabolism; phospholipid metabolism. Catalyzes the transfer of an acyl group from acyl-phosphate (acyl-PO(4)) to glycerol-3-phosphate (G3P) to form lysophosphatidic acid (LPA). This enzyme utilizes acyl-phosphate as fatty acyl donor, but not acyl-CoA or acyl-ACP. This chain is Glycerol-3-phosphate acyltransferase, found in Maridesulfovibrio salexigens (strain ATCC 14822 / DSM 2638 / NCIMB 8403 / VKM B-1763) (Desulfovibrio salexigens).